Here is a 249-residue protein sequence, read N- to C-terminus: 5'-nucleotidase SurE (249 aa).

Aspartate 8, aspartate 9, serine 39, and asparagine 91 together coordinate a divalent metal cation.

It belongs to the SurE nucleotidase family. The cofactor is a divalent metal cation.

It is found in the cytoplasm. The enzyme catalyses a ribonucleoside 5'-phosphate + H2O = a ribonucleoside + phosphate. Its function is as follows. Nucleotidase that shows phosphatase activity on nucleoside 5'-monophosphates. This is 5'-nucleotidase SurE from Azotobacter vinelandii (strain DJ / ATCC BAA-1303).